The chain runs to 164 residues: Protein-export protein SecB (164 aa).

The protein belongs to the SecB family. As to quaternary structure, homotetramer, a dimer of dimers. One homotetramer interacts with 1 SecA dimer.

The protein localises to the cytoplasm. One of the proteins required for the normal export of preproteins out of the cell cytoplasm. It is a molecular chaperone that binds to a subset of precursor proteins, maintaining them in a translocation-competent state. It also specifically binds to its receptor SecA. The sequence is that of Protein-export protein SecB from Nitrosococcus oceani (strain ATCC 19707 / BCRC 17464 / JCM 30415 / NCIMB 11848 / C-107).